A 446-amino-acid chain; its full sequence is Anthranilate N-benzoyltransferase protein 2 (446 aa).

Residues histidine 164 and aspartate 393 each act as proton acceptor in the active site.

It belongs to the plant acyltransferase family. Post-translationally, N-terminus is blocked.

The enzyme catalyses anthranilate + benzoyl-CoA = N-benzoylanthranilate + CoA. The protein operates within phytoalexin biosynthesis; methoxydianthramide B biosynthesis. Catalyzes the formation of N-benzoylanthranilate, in the course of methoxydianthramide B, a phytoalexin. Phytoalexins are produced in response to infection by parasites, and are essential for the expression of disease resistance. The sequence is that of Anthranilate N-benzoyltransferase protein 2 (HCBT2) from Dianthus caryophyllus (Carnation).